We begin with the raw amino-acid sequence, 860 residues long: Protein argonaute-3 (860 aa).

The 120-residue stretch at 230–349 folds into the PAZ domain; it reads PVIQFMCEVL…LPLEVCNIVA (120 aa). Positions 518–819 constitute a Piwi domain; the sequence is LIIVILPGKT…VAFRARYHLV (302 aa). Residues 530 to 567 are interaction with guide RNA; the sequence is YAEVKRVGDTLLGMATQCVQVKNVVKTSPQTLSNLCLK. Asp598, Glu638, and Asp670 together coordinate a divalent metal cation. Residues 758 to 805 form an interaction with guide RNA region; the sequence is QGTSRPSHYYVLWDDNCFTADEFQLLTYQLCHTYVRCTRSVSIPAPAY. Position 808 (His808) interacts with a divalent metal cation.

The protein belongs to the argonaute family. Ago subfamily.

Its subcellular location is the cytoplasm. The protein localises to the P-body. The enzyme catalyses Endonucleolytic cleavage to 5'-phosphomonoester.. Its function is as follows. Required for RNA-mediated gene silencing (RNAi). Binds to short RNAs such as microRNAs (miRNAs) and represses the translation of mRNAs which are complementary to them. Possesses RNA slicer activity but only on select RNAs bearing 5'- and 3'-flanking sequences to the region of guide-target complementarity. The polypeptide is Protein argonaute-3 (ago3) (Danio rerio (Zebrafish)).